A 428-amino-acid polypeptide reads, in one-letter code: MKIKFVDLFAGIGGIRIGFERAAKRFELETECVLSSEIDKKACETYALNFKEEPQGDIHEITSFPEFDFLLAGFPCQPFSYAGKQQGFGDTRGTLFFEVERVLRDNRPKAFLLENVRGLVTHDKGRTLKTIISKLEELGYGVSYLLLNSSTFGVPQNRVRIYILGILGSKPKLTLTSNVGAADSHKYKNEQISLFDESYATVKDILEDSPSEKYRCSDEFIGQLSKVVGNNFELLHGYRLIDYRGGNSIHSWELGIKGDCTKEEIEFLNQLIANRRKKIYGTHQDGKALTLEQIRTFYNHDQLEVIIKSLLQKGYLREEENKFNPVCGNMSFEVFKFLDPDSISITLTSSDAHKLGVVQNNVPRRITPRECARLQGFPDDFILHSNDNFAYKQLGNSVTVKVVEKVIEDLFQNNVNELFGQMKLANVV.

In terms of domain architecture, SAM-dependent MTase C5-type spans 3–417 (IKFVDLFAGI…EDLFQNNVNE (415 aa)). Residue cysteine 76 is part of the active site.

The protein belongs to the class I-like SAM-binding methyltransferase superfamily. C5-methyltransferase family. In terms of assembly, monomer.

It carries out the reaction a 2'-deoxycytidine in DNA + S-adenosyl-L-methionine = a 5-methyl-2'-deoxycytidine in DNA + S-adenosyl-L-homocysteine + H(+). Functionally, a methylase, recognizes the double-stranded sequence 5'-GGYRCC-3', methylates C-4 on both strands, and protects the DNA from cleavage by the BanI endonuclease. The polypeptide is Type II methyltransferase M.BanI (banIM) (Aneurinibacillus aneurinilyticus (Bacillus aneurinolyticus)).